The sequence spans 130 residues: L-ectoine synthase (130 aa).

The protein belongs to the ectoine synthase family.

The catalysed reaction is (2S)-4-acetamido-2-aminobutanoate = L-ectoine + H2O. It participates in amine and polyamine biosynthesis; ectoine biosynthesis; L-ectoine from L-aspartate 4-semialdehyde: step 3/3. Catalyzes the circularization of gamma-N-acetyl-alpha,gamma-diaminobutyric acid (ADABA) to ectoine (1,4,5,6-tetrahydro-2-methyl-4-pyrimidine carboxylic acid), which is an excellent osmoprotectant. The chain is L-ectoine synthase from Desulfatibacillum aliphaticivorans.